The primary structure comprises 442 residues: tRNA-2-methylthio-N(6)-dimethylallyladenosine synthase (442 aa).

Positions 2-120 (KKVFIRTFGC…LPKMIVDKET (119 aa)) constitute an MTTase N-terminal domain. Residues cysteine 11, cysteine 49, cysteine 83, cysteine 157, cysteine 161, and cysteine 164 each contribute to the [4Fe-4S] cluster site. The region spanning 143 to 375 (RVEGGAAFVS…NEVIEAETAR (233 aa)) is the Radical SAM core domain. The TRAM domain maps to 378 to 441 (QTMIGTVQRC…TFSLRGKVVE (64 aa)).

The protein belongs to the methylthiotransferase family. MiaB subfamily. As to quaternary structure, monomer. [4Fe-4S] cluster is required as a cofactor.

Its subcellular location is the cytoplasm. It catalyses the reaction N(6)-dimethylallyladenosine(37) in tRNA + (sulfur carrier)-SH + AH2 + 2 S-adenosyl-L-methionine = 2-methylsulfanyl-N(6)-dimethylallyladenosine(37) in tRNA + (sulfur carrier)-H + 5'-deoxyadenosine + L-methionine + A + S-adenosyl-L-homocysteine + 2 H(+). Catalyzes the methylthiolation of N6-(dimethylallyl)adenosine (i(6)A), leading to the formation of 2-methylthio-N6-(dimethylallyl)adenosine (ms(2)i(6)A) at position 37 in tRNAs that read codons beginning with uridine. The chain is tRNA-2-methylthio-N(6)-dimethylallyladenosine synthase from Neisseria meningitidis serogroup C / serotype 2a (strain ATCC 700532 / DSM 15464 / FAM18).